Consider the following 407-residue polypeptide: MTPTGPSHHSMAPKRVLPAASQSNMYGNIRSASTTSTTASTSSQALRLLQNAKTSKNADNRIAHAERQGPPSAHPAAMQKPAARVAPSNENRPDPAARQHQHQQQLQQQKATGHDRVLKESQAGNSTTTTMTSTQSKEANKWSLANFDIGRPLGKGKFGNVYLAREKKSKFIVALKVLFKSQLQKAKVEHQLRREIEIQSHLRHDHILRLYGYFYDDTRVYLILEYAARGELYKEMQAQKAGHFDEDRSAVYIYQLAKALLYCHEKKVIHRDIKPENLLLDLKGDLKIADFGWSVHAPSSRRATLCGTLDYLPPEMIEGKTHDEKVDLWSLGVLCYEFLVGKPPFESQGNTETYRKITKVEFTFPKHVSEGARDLICKLLKHNPSHRLSLEGVIAHAWIQEKISQRS.

Disordered stretches follow at residues 1-43 and 66-137; these read MTPT…STSS and ERQG…TQSK. 2 stretches are compositionally biased toward low complexity: residues 31–43 and 126–136; these read SAST…STSS and STTTTMTSTQS. The 253-residue stretch at 147–399 folds into the Protein kinase domain; sequence FDIGRPLGKG…LEGVIAHAWI (253 aa). ATP-binding positions include lysine 157, lysine 176, and 224 to 227; that span reads LEYA. The active-site Proton acceptor is the aspartate 272. Aspartate 290 serves as a coordination point for ATP.

This sequence belongs to the protein kinase superfamily. Ser/Thr protein kinase family.

It is found in the cytoplasm. Its subcellular location is the cytoskeleton. The protein resides in the spindle. The protein localises to the midbody. It localises to the microtubule organizing center. It is found in the centrosome. Its subcellular location is the nucleus. The protein resides in the chromosome. The protein localises to the centromere. It catalyses the reaction L-seryl-[protein] + ATP = O-phospho-L-seryl-[protein] + ADP + H(+). The enzyme catalyses L-threonyl-[protein] + ATP = O-phospho-L-threonyl-[protein] + ADP + H(+). Cdc2 activity is required for activation. In terms of biological role, serine/threonine protein kinase that contributes to the regulation of cell cycle progression. Involved in meiotic apparatus formation and polar body extrusion. Contributes to Plk1 activation and phosphorylation of histone H3 at 'Ser-10' during meiosis I. Required for accurate progression of early embryonic M phase. Involved in chromosome alignment and cleavage furrow formation during early embryonic cycles. May be involved in mitotic spindle formation and cytokinesis. This chain is Aurora kinase, found in Patiria pectinifera (Starfish).